The following is a 397-amino-acid chain: 2-isopropylmalate synthase 1 (397 aa).

A Pyruvate carboxyltransferase domain is found at 6–268 (VIVFDTTLRD…VHGINTKEIY (263 aa)). Residues Asp15, His203, His205, and Asn239 each contribute to the Mn(2+) site.

The protein belongs to the alpha-IPM synthase/homocitrate synthase family. LeuA type 1 subfamily. In terms of assembly, homodimer. The cofactor is Mn(2+).

The protein resides in the cytoplasm. The enzyme catalyses 3-methyl-2-oxobutanoate + acetyl-CoA + H2O = (2S)-2-isopropylmalate + CoA + H(+). It functions in the pathway amino-acid biosynthesis; L-leucine biosynthesis; L-leucine from 3-methyl-2-oxobutanoate: step 1/4. Catalyzes the condensation of the acetyl group of acetyl-CoA with 3-methyl-2-oxobutanoate (2-ketoisovalerate) to form 3-carboxy-3-hydroxy-4-methylpentanoate (2-isopropylmalate). The protein is 2-isopropylmalate synthase 1 of Caldanaerobacter subterraneus subsp. tengcongensis (strain DSM 15242 / JCM 11007 / NBRC 100824 / MB4) (Thermoanaerobacter tengcongensis).